The following is a 445-amino-acid chain: MNEEYDVIVLGTGLTECILSGIMSVNGKKVLHMDQNPYYGGESASITPLEDLYKRFKLPGQPPASMGRGRDWNVDLIPKFLMANGQLVKMLLFTEVTRYMDFKVIEGSFVYKGGKIYKVPSTEAEALASSLMGLFEKRRFRKFLVYVANFDEKDPRTFEGVDPKKTSMRDVYKKFDLGQDVIDFTGHSLALYRTDDYLDQPCCETINRIKLYSESLARYGKSPYLYPLYGLGELPQGFARLSAIYGGTYMLNKPIEEIIVQNGKVVGVKSEGEIARCKQLICDPSYVKDRVEKVGQVIRVICILSHPIKNTNDANSCQIIIPQNQVNRKSDIYVCMISFAHNVAAQGKYIAIVSTTVETKEPEKEIRPALELLEPIEQKFVSISDLFVPKDLGTDSQIFISRAYDATTHFETTCDDIKDIYKRMTGSEFDFEEMKRKKNDIYGED.

N-acetylmethionine is present on Met-1. Lys-57 is modified (N6-succinyllysine). Lys-112 is modified (N6-acetyllysine). Ser-130 bears the Phosphoserine mark. An N6-acetyllysine modification is found at Lys-269. Ser-382 carries the post-translational modification Phosphoserine.

It belongs to the Rab GDI family. Interacts with RHOH. Interacts with the GDP-bound inactive forms of RAB3A, RAB3B, RAB3C, RAB5A, RAB5B, RAB5C, RAB8A, RAB8B, RAB10, RAB12, RAB35, and RAB43; binds RAB3D to a lesser extent. Interacts with DZIP1; this interaction negatively regulates the interaction of GDI2 with GDP-bound RAB8A. In terms of tissue distribution, ubiquitously expressed.

The protein localises to the cytoplasm. It is found in the membrane. It localises to the golgi apparatus. The protein resides in the trans-Golgi network. In terms of biological role, GDP-dissociation inhibitor preventing the GDP to GTP exchange of most Rab proteins. By keeping these small GTPases in their inactive GDP-bound form regulates intracellular membrane trafficking. Negatively regulates protein transport to the cilium and ciliogenesis through the inhibition of RAB8A. This chain is Rab GDP dissociation inhibitor beta (Gdi2), found in Rattus norvegicus (Rat).